A 5251-amino-acid polypeptide reads, in one-letter code: Dynein heavy chain-like protein 2 (5251 aa).

5 Kelch repeats span residues 37–87, 95–143, 266–317, 318–367, and 372–421; these read GLFL…CYHN, YVII…LQNG, SLIL…IHGN, NLFI…LVES, and IIFI…QNNE. The interval 140–188 is disordered; the sequence is LQNGINGTNEKGYISQTDDENCSDNKYGENQDYGSNDSDSKDGEDIDKD. The disordered stretch occupies residues 686-732; the sequence is NNIEQRNNNNDNNDNNNNDNNNNNNNDNNNNNNNNNNNNNNNNDNLN. A compositionally biased stretch (low complexity) spans 692–730; that stretch reads NNNNDNNDNNNNDNNNNNNNDNNNNNNNNNNNNNNNNDN. Coiled coils occupy residues 1155 to 1225 and 1544 to 1610; these read DNII…KKIK and KLNN…KLIS. Residues 1554-1598 are disordered; sequence EKNKNANENSNEIETNKYNKKEELTNNRDGDGDDDDNIKNDKDEK. Residues 1567–1583 show a composition bias toward basic and acidic residues; that stretch reads ETNKYNKKEELTNNRDG. A Kelch 6 repeat occupies 1639-1685; it reads HIKYTLKYYITNLFRLKDLFNNEKEKWIDENYLAQVFILCNTIFFVN. Positions 1802–1825 are disordered; it reads HQEGKQEYNNKNNDNDNNNNNNNN. Positions 1810–1825 are enriched in low complexity; it reads NNKNNDNDNNNNNNNN. 1895-1902 is a binding site for ATP; the sequence is GPAGTGKT. Residues 2136–2188 adopt a coiled-coil conformation; the sequence is NDINENKKEKDNIEELKSDNVKEEKKTKKKHLEDNNNNKKKELFNLNNIEKEL. The segment at 2152 to 2171 is disordered; sequence KSDNVKEEKKTKKKHLEDNN. 2224 to 2231 is a binding site for ATP; sequence GEAGCGKT. One copy of the Kelch 7 repeat lies at 2447–2494; the sequence is VIWCFGGFLGEKDNVNYKKSFDKYWKNTFKSIKVNRKISVFDFYVENN. ATP-binding positions include 2546–2553 and 2890–2897; these read GKTGVGKT and GIGGCGKT. Composition is skewed to low complexity over residues 3138–3154 and 3652–3671; these read DNNN…DGNN and DQNF…NSTN. Disordered stretches follow at residues 3138 to 3163, 3652 to 3686, 4042 to 4250, 4280 to 4299, 4773 to 4824, and 4910 to 4948; these read DNNN…EGND, DQNF…NHNN, EDND…EENV, NGKI…DFEN, MDFH…ENEE, and KIIK…HSGS. Over residues 4059–4086 the composition is skewed to acidic residues; that stretch reads KMEDEEKMEEEKVDEEKMEEEKVDEEKM. A compositionally biased stretch (basic and acidic residues) spans 4087–4247; that stretch reads EDEKVEEKME…EKGEEQKAEE (161 aa). Acidic residues-rich tracts occupy residues 4289 to 4299 and 4807 to 4823; these read DDLEEEEDFEN and DDDD…EENE. Basic and acidic residues predominate over residues 4912 to 4937; it reads IKKEKPGDNKDNKYTHDQKKETIHKE.

The protein belongs to the dynein heavy chain family. As to quaternary structure, consists of at least two heavy chains and a number of intermediate and light chains.

Its subcellular location is the cytoplasm. It localises to the cytoskeleton. In terms of biological role, acts as a motor for the intracellular retrograde motility of vesicles and organelles along microtubules. Dynein has ATPase activity; the force-producing power stroke is thought to occur on release of ADP. This is Dynein heavy chain-like protein 2 from Plasmodium falciparum (isolate 3D7).